The following is a 168-amino-acid chain: Oleosin 18.2 kDa (168 aa).

Alanine 2 carries the post-translational modification N-acetylalanine. The segment at 2–45 (AEVRDRNLPHQVQVHPQYRLDNTTGGGYGAKNYHSGPSTSQVLA) is polar. 3 consecutive transmembrane segments (helical) span residues 43–63 (VLAVLTLLPIGGTLLALAGLT), 76–96 (PLFIIFSPVLVPAAIAIAMAV), and 97–117 (TGFLSSGAFGLTGLSSLSYVL). Positions 46 to 117 (VLTLLPIGGT…TGLSSLSYVL (72 aa)) are hydrophobic.

This sequence belongs to the oleosin family.

The protein localises to the lipid droplet. It is found in the membrane. May have a structural role to stabilize the lipid body during desiccation of the seed by preventing coalescence of the oil. Probably interacts with both lipid and phospholipid moieties of lipid bodies. May also provide recognition signals for specific lipase anchorage in lipolysis during seedling growth. In Gossypium hirsutum (Upland cotton), this protein is Oleosin 18.2 kDa (MATP6-A).